The chain runs to 252 residues: Hydroxyacylglutathione hydrolase (252 aa).

The Zn(2+) site is built by His-54, His-56, Asp-58, His-59, His-111, Asp-128, and His-166.

This sequence belongs to the metallo-beta-lactamase superfamily. Glyoxalase II family. As to quaternary structure, monomer. It depends on Zn(2+) as a cofactor.

It catalyses the reaction an S-(2-hydroxyacyl)glutathione + H2O = a 2-hydroxy carboxylate + glutathione + H(+). It participates in secondary metabolite metabolism; methylglyoxal degradation; (R)-lactate from methylglyoxal: step 2/2. In terms of biological role, thiolesterase that catalyzes the hydrolysis of S-D-lactoyl-glutathione to form glutathione and D-lactic acid. The polypeptide is Hydroxyacylglutathione hydrolase (Photobacterium profundum (strain SS9)).